The following is a 588-amino-acid chain: Cryptochrome-1 (588 aa).

The Photolyase/cryptochrome alpha/beta domain maps to 3 to 132 (VNAVHWFRKG…EVIVRISHTL (130 aa)). Lys-11 participates in a covalent cross-link: Glycyl lysine isopeptide (Lys-Gly) (interchain with G-Cter in ubiquitin). Residues 50-54 (NRWRF) carry the LIR 1 motif. Position 71 is a phosphoserine; by AMPK (Ser-71). Residues 82-87 (DVFPRL) carry the LIR 2 motif. Residue Lys-107 forms a Glycyl lysine isopeptide (Lys-Gly) (interchain with G-Cter in ubiquitin) linkage. An LIR 3 motif is present at residues 151–156 (KRFQTL). A Glycyl lysine isopeptide (Lys-Gly) (interchain with G-Cter in ubiquitin) cross-link involves residue Lys-159. Ser-247 carries the post-translational modification Phosphoserine; by MAPK. Residue Ser-252 coordinates FAD. 2 consecutive short sequence motifs (LIR) follow at residues 255-260 (LRFGCL) and 271-276 (DLYKKV). Ser-280 is subject to Phosphoserine; by AMPK. The short motif at 285–290 (SLYGQL) is the LIR 6 element. Residue Gln-289 coordinates FAD. Residue Lys-329 forms a Glycyl lysine isopeptide (Lys-Gly) (interchain with G-Cter in ubiquitin) linkage. Positions 335–339 (TGFPW) match the LIR 7 motif. Residue His-355 participates in FAD binding. A required for inhibition of CLOCK-BMAL1-mediated transcription region spans residues 371-470 (WISWEEGMKV…LIGVNYPKPM (100 aa)). Positions 379–384 (KVFEEL) match the LIR 8 motif. Residue 387–389 (DAD) participates in FAD binding. 3 short sequence motifs (LIR) span residues 395–400 (GSWMWL), 411–416 (HCYCPV), and 430–435 (RRYLPV). Positions 471 to 493 (VNHAEASRLNIERMKQIYQQLSR) are interaction with TIMELESS. Lys-485 is covalently cross-linked (Glycyl lysine isopeptide (Lys-Gly) (interchain with G-Cter in ubiquitin)). 2 short sequence motifs (LIR) span residues 486–491 (QIYQQL) and 492–497 (SRYRGL). Residues 511–588 (GGLMGYAPGE…GPKVQRQSSN (78 aa)) form a disordered region. A compositionally biased stretch (polar residues) spans 545–568 (DSQQTNPLKQGRSSMGTGLSSGKR). Lys-567 is covalently cross-linked (Glycyl lysine isopeptide (Lys-Gly) (interchain with G-Cter in ubiquitin)). Ser-570 is modified (phosphoserine).

It belongs to the DNA photolyase class-1 family. As to quaternary structure, component of the circadian core oscillator, which includes the CRY proteins, CLOCK or NPAS2, BMAL1 or BMAL2, CSNK1D and/or CSNK1E, TIMELESS, and the PER proteins. Interacts directly with TIMELESS. Interacts directly with PER1, PER2 and PER3; interaction with PER2 inhibits its ubiquitination and vice versa. Interacts with FBXL21. Interacts with FBXL3. Interacts with CLOCK-BMAL1 independently of PER2 and DNA. Interacts with HDAC1, HDAC2 and SIN3B. Interacts with nuclear receptors AR, NR1D1, NR3C1/GR, RORA and RORC; the interaction with at least NR3C1/GR is ligand dependent. Interacts with PRKDC. Interacts with the G protein subunit alpha GNAS; the interaction may block GPCR-mediated regulation of cAMP concentrations. Interacts with PRMT5. Interacts with EZH2. Interacts with MYBBP1A, DOCK7, HNRNPU, RPL7A, RPL8 and RPS3. Interacts with PPP5C (via TPR repeats). Interacts with MAP1LC3B. Interacts with CLOCK. Interacts with BMAL1. Interacts weakly with HDAC3; this interaction is enhanced in the presence of FBXL3. Interacts with TRIM28, KCTD5 and DDB1. Interacts with FOXO1. Interacts with DTL and DDB1-CUL4A complex. Interacts with HNF4A. Interacts with PSMD2 in a KDM8-dependent manner. Interacts with KDM8 in a FBXL3-dependent manner. Interacts with PPARG in a ligand-dependent manner. Interacts with PPARD (via domain NR LBD) and NR1I2 (via domain NR LBD) in a ligand-dependent manner. Interacts with PPARA, NR1I3 and VDR. FAD serves as cofactor. (6R)-5,10-methylene-5,6,7,8-tetrahydrofolate is required as a cofactor. Post-translationally, phosphorylation on Ser-247 by MAPK is important for the inhibition of CLOCK-BMAL1-mediated transcriptional activity. Phosphorylation by CSNK1E requires interaction with PER1 or PER2. Phosphorylation at Ser-71 and Ser-280 by AMPK decreases protein stability. Phosphorylation at Ser-570 exhibits a robust circadian rhythm with a peak at CT8, increases protein stability, prevents SCF(FBXL3)-mediated degradation and is antagonized by interaction with PRKDC. Ubiquitinated by the SCF(FBXL3) and SCF(FBXL21) complexes, regulating the balance between degradation and stabilization. The SCF(FBXL3) complex is mainly nuclear and mediates ubiquitination and subsequent degradation of CRY1. In contrast, cytoplasmic SCF(FBXL21) complex-mediated ubiquitination leads to stabilize CRY1 and counteract the activity of the SCF(FBXL3) complex. The SCF(FBXL3) and SCF(FBXL21) complexes probably mediate ubiquitination at different Lys residues. Ubiquitination at Lys-11 and Lys-107 are specifically ubiquitinated by the SCF(FBXL21) complex but not by the SCF(FBXL3) complex. Ubiquitination may be inhibited by PER2. Deubiquitinated by USP7. In terms of processing, undergoes autophagy-mediated degradation in the liver in a time-dependent manner. Autophagic degradation of CRY1 (an inhibitor of gluconeogenesis) occurs during periods of reduced feeding allowing induction of gluconeogenesis and maintenance of blood glucose levels.

Its subcellular location is the cytoplasm. The protein localises to the nucleus. Its function is as follows. Transcriptional repressor which forms a core component of the circadian clock. The circadian clock, an internal time-keeping system, regulates various physiological processes through the generation of approximately 24 hour circadian rhythms in gene expression, which are translated into rhythms in metabolism and behavior. It is derived from the Latin roots 'circa' (about) and 'diem' (day) and acts as an important regulator of a wide array of physiological functions including metabolism, sleep, body temperature, blood pressure, endocrine, immune, cardiovascular, and renal function. Consists of two major components: the central clock, residing in the suprachiasmatic nucleus (SCN) of the brain, and the peripheral clocks that are present in nearly every tissue and organ system. Both the central and peripheral clocks can be reset by environmental cues, also known as Zeitgebers (German for 'timegivers'). The predominant Zeitgeber for the central clock is light, which is sensed by retina and signals directly to the SCN. The central clock entrains the peripheral clocks through neuronal and hormonal signals, body temperature and feeding-related cues, aligning all clocks with the external light/dark cycle. Circadian rhythms allow an organism to achieve temporal homeostasis with its environment at the molecular level by regulating gene expression to create a peak of protein expression once every 24 hours to control when a particular physiological process is most active with respect to the solar day. Transcription and translation of core clock components (CLOCK, NPAS2, BMAL1, BMAL2, PER1, PER2, PER3, CRY1 and CRY2) plays a critical role in rhythm generation, whereas delays imposed by post-translational modifications (PTMs) are important for determining the period (tau) of the rhythms (tau refers to the period of a rhythm and is the length, in time, of one complete cycle). A diurnal rhythm is synchronized with the day/night cycle, while the ultradian and infradian rhythms have a period shorter and longer than 24 hours, respectively. Disruptions in the circadian rhythms contribute to the pathology of cardiovascular diseases, cancer, metabolic syndromes and aging. A transcription/translation feedback loop (TTFL) forms the core of the molecular circadian clock mechanism. Transcription factors, CLOCK or NPAS2 and BMAL1 or BMAL2, form the positive limb of the feedback loop, act in the form of a heterodimer and activate the transcription of core clock genes and clock-controlled genes (involved in key metabolic processes), harboring E-box elements (5'-CACGTG-3') within their promoters. The core clock genes: PER1/2/3 and CRY1/2 which are transcriptional repressors form the negative limb of the feedback loop and interact with the CLOCK|NPAS2-BMAL1|BMAL2 heterodimer inhibiting its activity and thereby negatively regulating their own expression. This heterodimer also activates nuclear receptors NR1D1/2 and RORA/B/G, which form a second feedback loop and which activate and repress BMAL1 transcription, respectively. CRY1 and CRY2 have redundant functions but also differential and selective contributions at least in defining the pace of the SCN circadian clock and its circadian transcriptional outputs. More potent transcriptional repressor in cerebellum and liver than CRY2, though more effective in lengthening the period of the SCN oscillator. On its side, CRY2 seems to play a critical role in tuning SCN circadian period by opposing the action of CRY1. With CRY2, is dispensable for circadian rhythm generation but necessary for the development of intercellular networks for rhythm synchrony. Capable of translocating circadian clock core proteins such as PER proteins to the nucleus. Interacts with CLOCK-BMAL1 independently of PER proteins and is found at CLOCK-BMAL1-bound sites, suggesting that CRY may act as a molecular gatekeeper to maintain CLOCK-BMAL1 in a poised and repressed state until the proper time for transcriptional activation. Represses the CLOCK-BMAL1 induced transcription of BHLHE40/DEC1, ATF4, MTA1, KLF10 and NAMPT. May repress circadian target genes expression in collaboration with HDAC1 and HDAC2 through histone deacetylation. Mediates the clock-control activation of ATR and modulates ATR-mediated DNA damage checkpoint. In liver, mediates circadian regulation of cAMP signaling and gluconeogenesis by binding to membrane-coupled G proteins and blocking glucagon-mediated increases in intracellular cAMP concentrations and CREB1 phosphorylation. Inhibits hepatic gluconeogenesis by decreasing nuclear FOXO1 levels that down-regulates gluconeogenic gene expression. Besides its role in the maintenance of the circadian clock, is also involved in the regulation of other processes. Represses glucocorticoid receptor NR3C1/GR-induced transcriptional activity by binding to glucocorticoid response elements (GREs). Plays a key role in glucose and lipid metabolism modulation, in part, through the transcriptional regulation of genes involved in these pathways, such as LEP or ACSL4. Represses PPARD and its target genes in the skeletal muscle and limits exercise capacity. Plays an essential role in the generation of circadian rhythms in the retina. Represses the transcriptional activity of NR1I2. This chain is Cryptochrome-1 (Cry1), found in Rattus norvegicus (Rat).